The primary structure comprises 280 residues: Pantothenate synthetase (280 aa).

Residue 32 to 39 coordinates ATP; it reads MGALHAGH. Histidine 39 functions as the Proton donor in the catalytic mechanism. Glutamine 63 provides a ligand contact to (R)-pantoate. Glutamine 63 lines the beta-alanine pocket. 149–152 contributes to the ATP binding site; it reads GEKD. Glutamine 155 contacts (R)-pantoate. Residues valine 178 and 186–189 each bind ATP; that span reads MSSR.

The protein belongs to the pantothenate synthetase family. As to quaternary structure, homodimer.

The protein localises to the cytoplasm. The enzyme catalyses (R)-pantoate + beta-alanine + ATP = (R)-pantothenate + AMP + diphosphate + H(+). Its pathway is cofactor biosynthesis; (R)-pantothenate biosynthesis; (R)-pantothenate from (R)-pantoate and beta-alanine: step 1/1. Its function is as follows. Catalyzes the condensation of pantoate with beta-alanine in an ATP-dependent reaction via a pantoyl-adenylate intermediate. The chain is Pantothenate synthetase from Ruegeria sp. (strain TM1040) (Silicibacter sp.).